The primary structure comprises 583 residues: Radixin (583 aa).

The FERM domain maps to 5 to 295 (INVRVTTMDA…GNHELYMRRR (291 aa)). 60-63 (KLNK) provides a ligand contact to a 1,2-diacyl-sn-glycero-3-phospho-(1D-myo-inositol). Lysine 83 bears the N6-succinyllysine mark. Lysine 278 serves as a coordination point for a 1,2-diacyl-sn-glycero-3-phospho-(1D-myo-inositol). 3 disordered regions span residues 309-336 (AREEKHQKQLERAQLENEKKKREIAEKE), 374-407 (ELDQERKRAKEEAERLEKERQAAEEAKSALAKQA), and 460-526 (KEEL…RVKK). Residues 374–400 (ELDQERKRAKEEAERLEKERQAAEEAK) are compositionally biased toward basic and acidic residues. A compositionally biased stretch (pro residues) spans 469 to 480 (APPPPPPPPVIP). Composition is skewed to basic and acidic residues over residues 483-492 (ENEHDEHDEN) and 506-525 (MNHRSEEERVTETQKNERVK). Residue threonine 564 is modified to Phosphothreonine; by ROCK2.

In terms of assembly, interacts with CPNE1 (via VWFA domain) and CPNE4 (via VWFA domain). Binds NHERF1. Interacts with NHERF1, NHERF2, LAYN, MME/NEP and ICAM2. Interacts (via FERM domain) with SPN/CD43 cytoplasmic tail. Interacts with CD44. Interacts with CLIC5; may work together in a complex which also includes EZR and MYO6 to stabilize linkages between the plasma membrane and subjacent actin cytoskeleton at the base of stereocilia. Phosphorylated by tyrosine-protein kinases. Phosphorylation by ROCK2 suppresses the head-to-tail association of the N-terminal and C-terminal halves resulting in an opened conformation which is capable of actin and membrane-binding.

It is found in the cell membrane. Its subcellular location is the cytoplasm. The protein resides in the cytoskeleton. It localises to the cleavage furrow. The protein localises to the cell projection. It is found in the microvillus. Its subcellular location is the stereocilium. A head-to-tail association, of the N-terminal and C-terminal halves results in a closed conformation (inactive form) which is incapable of actin or membrane-binding. In terms of biological role, probably plays a crucial role in the binding of the barbed end of actin filaments to the plasma membrane. This chain is Radixin (RDX), found in Bos taurus (Bovine).